A 350-amino-acid polypeptide reads, in one-letter code: Phosphotriesterase-related protein (350 aa).

A divalent metal cation contacts are provided by H22, H24, E169, H201, H230, and D298.

Belongs to the metallo-dependent hydrolases superfamily. Phosphotriesterase family. A divalent metal cation is required as a cofactor.

In Drosophila willistoni (Fruit fly), this protein is Phosphotriesterase-related protein.